The chain runs to 422 residues: Elongation factor 1-alpha (422 aa).

The 217-residue stretch at Lys5 to Thr221 folds into the tr-type G domain. The G1 stretch occupies residues Gly14 to Ser21. Gly14–Ser21 lines the GTP pocket. Ser21 lines the Mg(2+) pocket. The G2 stretch occupies residues Gly70–Asp74. The interval Asp91 to Gly94 is G3. Residues Asp91–His95 and Asn146–Asp149 each bind GTP. The segment at Asn146–Asp149 is G4. A G5 region spans residues Ser185–Phe187.

The protein belongs to the TRAFAC class translation factor GTPase superfamily. Classic translation factor GTPase family. EF-Tu/EF-1A subfamily.

It localises to the cytoplasm. It catalyses the reaction GTP + H2O = GDP + phosphate + H(+). Functionally, GTP hydrolase that promotes the GTP-dependent binding of aminoacyl-tRNA to the A-site of ribosomes during protein biosynthesis. The protein is Elongation factor 1-alpha of Natronomonas pharaonis (strain ATCC 35678 / DSM 2160 / CIP 103997 / JCM 8858 / NBRC 14720 / NCIMB 2260 / Gabara) (Halobacterium pharaonis).